Here is a 141-residue protein sequence, read N- to C-terminus: Transcription antitermination protein NusB (141 aa).

This sequence belongs to the NusB family.

In terms of biological role, involved in transcription antitermination. Required for transcription of ribosomal RNA (rRNA) genes. Binds specifically to the boxA antiterminator sequence of the ribosomal RNA (rrn) operons. The sequence is that of Transcription antitermination protein NusB from Clostridium botulinum (strain Loch Maree / Type A3).